The chain runs to 548 residues: CTL-like protein DDB_G0288717 (548 aa).

Residues 1–44 (MWAPEEDYKQPLLTNSRVANNGNNNNSNGRGGSSSPSTRLQPEH) form a disordered region. N25 carries N-linked (GlcNAc...) asparagine glycosylation. The chain crosses the membrane as a helical span at residues 52-72 (ILFTILFLLVIGGMAAISGIA). N-linked (GlcNAc...) asparagine glycosylation is present at N97. The next 4 membrane-spanning stretches (helical) occupy residues 125–145 (DILI…IQLL), 151–171 (FFIY…GGLF), 184–204 (MIVG…IVYL), and 226–246 (PSVF…IAYW). N273 is a glycosylation site (N-linked (GlcNAc...) asparagine). 2 consecutive transmembrane segments (helical) span residues 290-310 (NLMY…SAVF) and 350-370 (FGSL…AFML). N377 carries an N-linked (GlcNAc...) asparagine glycan. The next 3 helical transmembrane spans lie at 381–401 (KLVV…ESIV), 442–462 (FIGG…SALF), and 479–499 (IALS…IVGI). N544 carries N-linked (GlcNAc...) asparagine glycosylation.

Belongs to the CTL (choline transporter-like) family.

The protein localises to the membrane. This is CTL-like protein DDB_G0288717 from Dictyostelium discoideum (Social amoeba).